Here is a 262-residue protein sequence, read N- to C-terminus: Putative ankyrin repeat protein R848 (262 aa).

7 ANK repeats span residues 8 to 37 (SNDYALSLASKNGHIKVVKYLVSKDANVTH), 38 to 67 (DNNYAVRYASENGHFEVVKYLVDQGADIRD), 68 to 97 (CRDYAVRFASENGHLEVVKYLVDKGANIRA), 99 to 127 (DDYAVCLASVNGYIEIVKYLVSQGANFRA), 128 to 157 (DNDYAVRFASENGYLEVVKFLVDQGADIRA), 159 to 187 (DDYAIISASVYGHLEVIKFLMSQGADFRS), and 189 to 217 (NNASIKLAIKYKHPEIIEYFLTQCTDVNT).

This Acanthamoeba polyphaga (Amoeba) protein is Putative ankyrin repeat protein R848.